The sequence spans 443 residues: Glucose-6-phosphate isomerase (443 aa).

Glu-285 serves as the catalytic Proton donor. Residues His-306 and Lys-420 contribute to the active site.

Belongs to the GPI family.

It is found in the cytoplasm. The enzyme catalyses alpha-D-glucose 6-phosphate = beta-D-fructose 6-phosphate. It functions in the pathway carbohydrate biosynthesis; gluconeogenesis. It participates in carbohydrate degradation; glycolysis; D-glyceraldehyde 3-phosphate and glycerone phosphate from D-glucose: step 2/4. Catalyzes the reversible isomerization of glucose-6-phosphate to fructose-6-phosphate. This is Glucose-6-phosphate isomerase from Staphylococcus aureus (strain NCTC 8325 / PS 47).